Reading from the N-terminus, the 27-residue chain is MTQRPWSKLQRKTHNIAALKIIARRSE.

This is Protein YkiD from Escherichia coli (strain K12).